We begin with the raw amino-acid sequence, 430 residues long: MKTSIFKSLYFQVLAAITIGILLGHFYPQLGEQMKPLGDGFVKLIKMIIAPVIFCTVVTGIAGMESMKSVGRTGAAALLYFEVVSTIALIIGLVVVNVVQPGVGMNIDPSTLDASAVAVYTQQASQQGLIPFLMDVIPASVVGAFASGNILQVLLFAVMFGFALHRLGPKGKVIFDVIESFSKVIFGVINMIMKLAPLGAFGAMAFTIGKYGVGTLVQLGQLILCFYLTCILFVFLVLGSIAKATGFSIFKFIRYIREELLIVLGTSSSESVLPRMLEKMEKVGCKKSVVGLVIPTGYSFNLDGTSIYLTMAAVFIAQATNSHMDIWHQITLLVVLLLSSKGAAGVTGSGFIVLAATLSAVGHLPVAGLALILGIDRFMSEARALTNLIGNGVATIVVAKYCRELDEKKLDAELSGNNKNDNAATPTAQS.

9 helical membrane-spanning segments follow: residues 8-28 (SLYF…HFYP), 44-64 (LIKM…IAGM), 76-96 (AALL…LVVV), 144-164 (AFAS…GFAL), 184-204 (VIFG…FGAM), 222-242 (LILC…GSIA), 289-309 (VVGL…SIYL), 326-346 (IWHQ…AAGV), and 352-372 (IVLA…LALI).

This sequence belongs to the dicarboxylate/amino acid:cation symporter (DAACS) (TC 2.A.23) family.

It localises to the cell inner membrane. Its function is as follows. Responsible for the transport of dicarboxylates such as succinate, fumarate, and malate from the periplasm across the membrane. The polypeptide is C4-dicarboxylate transport protein (Pectobacterium atrosepticum (strain SCRI 1043 / ATCC BAA-672) (Erwinia carotovora subsp. atroseptica)).